We begin with the raw amino-acid sequence, 479 residues long: Bifunctional protein HldE (479 aa).

A ribokinase region spans residues 1–322 (MIDDFRFGRI…RELLQEMPET (322 aa)). 198-201 (NRIE) contributes to the ATP binding site. The active site involves aspartate 267. The segment at 347–479 (FTNGCFDLVH…LVRGMQSAPS (133 aa)) is cytidylyltransferase.

It in the N-terminal section; belongs to the carbohydrate kinase PfkB family. This sequence in the C-terminal section; belongs to the cytidylyltransferase family. Homodimer.

It carries out the reaction D-glycero-beta-D-manno-heptose 7-phosphate + ATP = D-glycero-beta-D-manno-heptose 1,7-bisphosphate + ADP + H(+). The catalysed reaction is D-glycero-beta-D-manno-heptose 1-phosphate + ATP + H(+) = ADP-D-glycero-beta-D-manno-heptose + diphosphate. It functions in the pathway nucleotide-sugar biosynthesis; ADP-L-glycero-beta-D-manno-heptose biosynthesis; ADP-L-glycero-beta-D-manno-heptose from D-glycero-beta-D-manno-heptose 7-phosphate: step 1/4. It participates in nucleotide-sugar biosynthesis; ADP-L-glycero-beta-D-manno-heptose biosynthesis; ADP-L-glycero-beta-D-manno-heptose from D-glycero-beta-D-manno-heptose 7-phosphate: step 3/4. Functionally, catalyzes the phosphorylation of D-glycero-D-manno-heptose 7-phosphate at the C-1 position to selectively form D-glycero-beta-D-manno-heptose-1,7-bisphosphate. In terms of biological role, catalyzes the ADP transfer from ATP to D-glycero-beta-D-manno-heptose 1-phosphate, yielding ADP-D-glycero-beta-D-manno-heptose. The protein is Bifunctional protein HldE of Gluconobacter oxydans (strain 621H) (Gluconobacter suboxydans).